Here is a 41-residue protein sequence, read N- to C-terminus: Large ribosomal subunit protein bL36 (41 aa).

The protein belongs to the bacterial ribosomal protein bL36 family.

This chain is Large ribosomal subunit protein bL36, found in Dinoroseobacter shibae (strain DSM 16493 / NCIMB 14021 / DFL 12).